Reading from the N-terminus, the 296-residue chain is Cation-efflux pump FieF (296 aa).

At 1-18 (MTQTSQYDFWVKLASRAS) the chain is on the cytoplasmic side. Residues 19–32 (VATALTLITIKLLA) traverse the membrane as a helical segment. Residues 33–43 (WLYSGSASMLA) lie on the Periplasmic side of the membrane. Residues 44 to 60 (SLTDSFADTLASIINFI) form a helical membrane-spanning segment. 5 residues coordinate Zn(2+): aspartate 47, aspartate 51, aspartate 70, histidine 73, and histidine 77. The Cytoplasmic segment spans residues 61–83 (AIRYAIVPADHDHRYGHGKAEPL). A helical transmembrane segment spans residues 84-105 (AALAQSAFIMGSAFLLLFYGGE). Residues 106–119 (RLLNPSPVENATLG) lie on the Periplasmic side of the membrane. Residues 120-138 (VVVSVVAIVLTLALVLLQK) form a helical membrane-spanning segment. Residues 139–145 (RALAATN) lie on the Cytoplasmic side of the membrane. Residues 146-160 (STVVEADSLHYKSDL) traverse the membrane as a helical segment. Histidine 155 and aspartate 159 together coordinate Zn(2+). Topologically, residues 161–180 (FLNAAVLLALVLSQYGWWWA) are periplasmic. A helical membrane pass occupies residues 181–200 (DGLFAVLIACYIGQQAFDLG). The Cytoplasmic segment spans residues 201-296 (YRSIQALLDR…DPVQVEPTTQ (96 aa)). Residues histidine 234, aspartate 235, histidine 250, histidine 263, histidine 285, and aspartate 287 each coordinate Zn(2+).

This sequence belongs to the cation diffusion facilitator (CDF) transporter (TC 2.A.4) family. FieF subfamily. In terms of assembly, homodimer. The subunits are held together in a parallel orientation through zinc binding at the interface of the cytoplasmic domains.

The protein localises to the cell inner membrane. The catalysed reaction is Zn(2+)(in) + H(+)(out) = Zn(2+)(out) + H(+)(in). The enzyme catalyses Cd(2+)(in) + H(+)(out) = Cd(2+)(out) + H(+)(in). It catalyses the reaction Fe(2+)(in) + H(+)(out) = Fe(2+)(out) + H(+)(in). Cytoplasmic zinc binding may trigger movements of two electrically repulsive cytoplasmic domains and reorient transmembrane helices, thereby modulating coordination geometry of the active site for zinc transport. It may modulate activity in response to cytoplasmic metal fluctuations. In terms of biological role, divalent metal cation transporter which exports Zn(2+), Cd(2+) and possibly Fe(2+). Zn(2+)/H(+) antiporter capable of using the proton motive force to remove Zn(2+) from the cytoplasm. May be involved in zinc and iron detoxification by efflux. The polypeptide is Cation-efflux pump FieF (Shewanella oneidensis (strain ATCC 700550 / JCM 31522 / CIP 106686 / LMG 19005 / NCIMB 14063 / MR-1)).